Reading from the N-terminus, the 133-residue chain is Nickel-responsive regulator (133 aa).

Ni(2+) is bound by residues H76, H87, H89, and C95.

This sequence belongs to the transcriptional regulatory CopG/NikR family. As to quaternary structure, homotetramer. It depends on Ni(2+) as a cofactor.

Its function is as follows. Transcriptional repressor of the nikABCDE operon. Is active in the presence of excessive concentrations of intracellular nickel. The chain is Nickel-responsive regulator from Escherichia coli (strain SE11).